The following is a 317-amino-acid chain: Putative 2-hydroxyacid dehydrogenase SA2098 (317 aa).

NAD(+) is bound by residues 155–156 (EI), 234–236 (ASR), and aspartate 260. The active site involves arginine 236. Glutamate 265 is an active-site residue. Catalysis depends on histidine 283, which acts as the Proton donor. Residue 283-286 (HIGN) participates in NAD(+) binding.

Belongs to the D-isomer specific 2-hydroxyacid dehydrogenase family.

This Staphylococcus aureus (strain N315) protein is Putative 2-hydroxyacid dehydrogenase SA2098.